Here is a 209-residue protein sequence, read N- to C-terminus: Auxin-binding protein ABP19b (209 aa).

An N-terminal signal peptide occupies residues 1–18; it reads MIFPIFFTFFLLLSTSHA. A disulfide bond links cysteine 24 and cysteine 39. Residues 53-199 form the Cupin type-1 domain; it reads SGLGIAGNTT…TTLLDAPQIK (147 aa). Asparagine 60 carries an N-linked (GlcNAc...) asparagine glycan. Mn(2+)-binding residues include histidine 101, histidine 103, glutamate 108, and histidine 147.

It belongs to the germin family. As to quaternary structure, interacts with ABP20.

The protein localises to the secreted. Its subcellular location is the extracellular space. It is found in the apoplast. The protein resides in the cell wall. In terms of biological role, probable receptor for the plant growth-promoting hormone auxin. The chain is Auxin-binding protein ABP19b (ABP19B) from Prunus persica (Peach).